The sequence spans 480 residues: Cysteine--tRNA ligase (480 aa).

C29 lines the Zn(2+) pocket. The 'HIGH' region signature appears at 31–41; sequence PTVYGHAHLGH. Zn(2+)-binding residues include C221, H246, and E250. Positions 278-282 match the 'KMSKS' region motif; that stretch reads KMGKS. K281 serves as a coordination point for ATP.

The protein belongs to the class-I aminoacyl-tRNA synthetase family. In terms of assembly, monomer. The cofactor is Zn(2+).

Its subcellular location is the cytoplasm. The enzyme catalyses tRNA(Cys) + L-cysteine + ATP = L-cysteinyl-tRNA(Cys) + AMP + diphosphate. This chain is Cysteine--tRNA ligase, found in Chlorobium chlorochromatii (strain CaD3).